The primary structure comprises 118 residues: Large ribosomal subunit protein uL18 (118 aa).

It belongs to the universal ribosomal protein uL18 family. As to quaternary structure, part of the 50S ribosomal subunit; part of the 5S rRNA/L5/L18/L25 subcomplex. Contacts the 5S and 23S rRNAs.

Functionally, this is one of the proteins that bind and probably mediate the attachment of the 5S RNA into the large ribosomal subunit, where it forms part of the central protuberance. The sequence is that of Large ribosomal subunit protein uL18 from Campylobacter jejuni subsp. doylei (strain ATCC BAA-1458 / RM4099 / 269.97).